A 405-amino-acid polypeptide reads, in one-letter code: Exodeoxyribonuclease 7 large subunit (405 aa).

Belongs to the XseA family. As to quaternary structure, heterooligomer composed of large and small subunits.

It localises to the cytoplasm. It carries out the reaction Exonucleolytic cleavage in either 5'- to 3'- or 3'- to 5'-direction to yield nucleoside 5'-phosphates.. Bidirectionally degrades single-stranded DNA into large acid-insoluble oligonucleotides, which are then degraded further into small acid-soluble oligonucleotides. The sequence is that of Exodeoxyribonuclease 7 large subunit from Halothermothrix orenii (strain H 168 / OCM 544 / DSM 9562).